Consider the following 482-residue polypeptide: Catalase (482 aa).

Positions 1 to 11 are enriched in polar residues; it reads MNAMTNKTLTT. Residues 1–21 are disordered; sequence MNAMTNKTLTTAAGAPVADNN. Catalysis depends on residues H57 and N130. Y340 contributes to the heme binding site.

Belongs to the catalase family. In terms of assembly, homodimer. Requires heme as cofactor.

It catalyses the reaction 2 H2O2 = O2 + 2 H2O. In terms of biological role, decomposes hydrogen peroxide into water and oxygen; serves to protect cells from the toxic effects of hydrogen peroxide. This is Catalase (katA) from Bordetella bronchiseptica (strain ATCC BAA-588 / NCTC 13252 / RB50) (Alcaligenes bronchisepticus).